Reading from the N-terminus, the 319-residue chain is Ribosomal protein L11 methyltransferase (319 aa).

Residues Thr165, Gly186, Asp208, and Asn251 each contribute to the S-adenosyl-L-methionine site.

Belongs to the methyltransferase superfamily. PrmA family.

It localises to the cytoplasm. It catalyses the reaction L-lysyl-[protein] + 3 S-adenosyl-L-methionine = N(6),N(6),N(6)-trimethyl-L-lysyl-[protein] + 3 S-adenosyl-L-homocysteine + 3 H(+). Methylates ribosomal protein L11. The chain is Ribosomal protein L11 methyltransferase from Limosilactobacillus reuteri subsp. reuteri (strain JCM 1112) (Lactobacillus reuteri).